A 484-amino-acid chain; its full sequence is D-aminoacylase (484 aa).

This sequence belongs to the metallo-dependent hydrolases superfamily. N-acyl-D-amino-acid deacylase family. Zn(2+) is required as a cofactor.

The protein localises to the cytoplasm. The enzyme catalyses an N-acyl-D-amino acid + H2O = a D-alpha-amino acid + a carboxylate. Functionally, has a wide specificity; hydrolyzes N-acyl derivative of neutral D-amino acids. The sequence is that of D-aminoacylase (dan) from Alcaligenes xylosoxydans xylosoxydans (Achromobacter xylosoxidans).